The sequence spans 44 residues: uncharacterized protein (44 aa).

Its subcellular location is the plastid. The protein localises to the chloroplast. This is an uncharacterized protein from Trieres chinensis (Marine centric diatom).